Reading from the N-terminus, the 415-residue chain is MSLCKDSIYILMSNLYSKGMAYLFYFITAFLLGTEAFGILKGLMPIADTLTIFFSSGIPPAIAKFLAEEKEVDINKYIPILYLMILLSVVGFILTPYIKYILGGHYLNLPNILYFAVGLCVVASTVIAFSRGILQGLLKMKYLSLTWIVEYTAKVILVFILTLYLGIFGSLLSISLAYLVGGIFGLYLIYKALKGKFDFKKLIDIKNTTKNIFSNFNLDILRYSIPIALTSSSYRLFGDIDNIVIMSIMGGFWSGIYGYSSLISRGIFMFASAVSIPLLPRISKTKDLSLLKEGIIQNTIFSSIFVIGCLFFPEIPLIAFFKTANPEGILCLRILAISSLFMSYYTLISSALQGLGYAKISFYIILFGLVLNIILNLILVNAYGIVGGSLATLITSISVFLIGVFAILRIKKHII.

The next 10 membrane-spanning stretches (helical) occupy residues 20 to 40 (MAYL…FGIL), 43 to 63 (LMPI…PAIA), 78 to 98 (IPIL…TPYI), 109 to 129 (LPNI…VIAF), 155 to 175 (VILV…LSIS), 243 to 263 (IVIM…SSLI), 300 to 320 (IFSS…LIAF), 328 to 348 (GILC…YTLI), 360 to 380 (ISFY…LILV), and 388 to 408 (GSLA…FAIL).

The protein belongs to the polysaccharide synthase family.

The protein localises to the cell membrane. This is an uncharacterized protein from Methanocaldococcus jannaschii (strain ATCC 43067 / DSM 2661 / JAL-1 / JCM 10045 / NBRC 100440) (Methanococcus jannaschii).